Here is a 976-residue protein sequence, read N- to C-terminus: MPRPGFAHATAPALAHARARISPVARRRVVVMRTRVDGAAKSLVTQLRLALGSTASRASSIASARRRVRALGTATNDQSTGTRANPNAEGKDNSGRGIRRRFLEFYEARGHSRQPSASLVPEDPTVLLTIAGMLQFKPVFMGQREREMPRATTTQKCVRTNDIENVGVTARHHTFFEMLGNFSFGDYFKREACEWAWELATNEFGLNPERVWVSVFREDDEAFAIWRDVVGVPESRIKRMDEKDNFWAAGPTGPCGPCSELYYDFHPERGLDGADLDDDSRFIEFYNLVFMELNRDADGGIKPLKNKNIDTGMGLERMAQILQGVSNNYETDLIRPIIDKAASMAGLDYASCSATQKQQLKVIGDHTRAVTYMISDGVFASNIGRGYIVRRLLRRVVRNGRLLGIKPADGQSAFTPSIAEVAISMSEECDPQVVKNTARILAELEREELSFQKTLGRGEEMLAELIEKAKDSKSGLSGKDAFTLYDTYGFPLDITTDVASEAGIAVDLEGFEKAMAEQRSMSQAAHQTVDVTAGNALAQVADELGAMSEFIGYDNISSDVSNVLAIVSGGESVEEASGGARVDVVLDVTPFYAESGGQVGDNGFLHSADGAVLKVTDVQKAGGGRIIVHSATVVKGSIKKGSQVSANVDENARRRARNNHTATHLLQSALKKVLGDDVSQAGSLCGFDRLRFDFNCPKAVTEAQLLEVETLVNGWISQSADLTAEEMPIAAAKEKGATMMFGEKYGDVVRVVDVPGISMELCGGTHVSNTAEIGGFKIISEAGIASGIRRIEAVAGAGVVELLQQRDAVVKQLASTLRVPPEEIASRVSGMQKDLVAAQKLAESLRGELAVAKANALVSEARAVGESKVLVARLDGVDPGALKVAAENLATQLGDGAAVILGSANGDNVGLVALFDTKVQKDGDLKAGQVLGAAAKRCGGGGGGKPGFAQAGGRDATQLDAALDEALQTLTTALDK.

A chloroplast and mitochondrion-targeting transit peptide spans 1–54; sequence MPRPGFAHATAPALAHARARISPVARRRVVVMRTRVDGAAKSLVTQLRLALGST. Residues 71-95 form a disordered region; sequence LGTATNDQSTGTRANPNAEGKDNSG. Polar residues predominate over residues 73-85; that stretch reads TATNDQSTGTRAN.

The protein belongs to the class-II aminoacyl-tRNA synthetase family. As to quaternary structure, monomer. Requires Zn(2+) as cofactor.

Its subcellular location is the plastid. It is found in the chloroplast. The protein localises to the mitochondrion. The catalysed reaction is tRNA(Ala) + L-alanine + ATP = L-alanyl-tRNA(Ala) + AMP + diphosphate. In terms of biological role, catalyzes the attachment of alanine to tRNA(Ala) in a two-step reaction: alanine is first activated by ATP to form Ala-AMP and then transferred to the acceptor end of tRNA(Ala). Also edits incorrectly charged tRNA(Ala) via its editing domain. This is Probable alanine--tRNA ligase, chloroplastic/mitochondrial from Ostreococcus tauri.